A 179-amino-acid polypeptide reads, in one-letter code: UPF0302 protein EF_1554 (179 aa).

The protein belongs to the UPF0302 family.

In Enterococcus faecalis (strain ATCC 700802 / V583), this protein is UPF0302 protein EF_1554.